Consider the following 301-residue polypeptide: Phosphatidylglycerol--prolipoprotein diacylglyceryl transferase (301 aa).

3 consecutive transmembrane segments (helical) span residues leucine 17 to glycine 37, methionine 59 to tyrosine 79, and glycine 97 to tyrosine 117. Arginine 142 contributes to the a 1,2-diacyl-sn-glycero-3-phospho-(1'-sn-glycerol) binding site. Transmembrane regions (helical) follow at residues methionine 230–phenylalanine 250 and leucine 265–tryptophan 285.

It belongs to the Lgt family.

Its subcellular location is the cell inner membrane. The enzyme catalyses L-cysteinyl-[prolipoprotein] + a 1,2-diacyl-sn-glycero-3-phospho-(1'-sn-glycerol) = an S-1,2-diacyl-sn-glyceryl-L-cysteinyl-[prolipoprotein] + sn-glycerol 1-phosphate + H(+). It functions in the pathway protein modification; lipoprotein biosynthesis (diacylglyceryl transfer). Its function is as follows. Catalyzes the transfer of the diacylglyceryl group from phosphatidylglycerol to the sulfhydryl group of the N-terminal cysteine of a prolipoprotein, the first step in the formation of mature lipoproteins. This chain is Phosphatidylglycerol--prolipoprotein diacylglyceryl transferase, found in Paraburkholderia xenovorans (strain LB400).